A 308-amino-acid polypeptide reads, in one-letter code: Porphobilinogen deaminase (308 aa).

Cysteine 241 is subject to S-(dipyrrolylmethanemethyl)cysteine.

Belongs to the HMBS family. As to quaternary structure, monomer. Dipyrromethane is required as a cofactor.

The enzyme catalyses 4 porphobilinogen + H2O = hydroxymethylbilane + 4 NH4(+). It functions in the pathway porphyrin-containing compound metabolism; protoporphyrin-IX biosynthesis; coproporphyrinogen-III from 5-aminolevulinate: step 2/4. Functionally, tetrapolymerization of the monopyrrole PBG into the hydroxymethylbilane pre-uroporphyrinogen in several discrete steps. This is Porphobilinogen deaminase from Staphylococcus aureus (strain Mu50 / ATCC 700699).